A 479-amino-acid chain; its full sequence is Odorant receptor coreceptor (479 aa).

The Cytoplasmic segment spans residues 1-43 (MMKMKQQGLVADLLPNIRVMKFFGHFVFNYYDDNSSKYLHKIF). The helical transmembrane segment at 44 to 64 (CCVNLFLLLLQFALCAVNLII) threads the bilayer. Residues 65-73 (ESADVDDLT) lie on the Extracellular side of the membrane. Residues 74-94 (ANTITLLFFTHSIVKIIYFAV) traverse the membrane as a helical segment. At 95–133 (RSKYFYRTWAIWNNPNSHPLFAESNARYHAIALKKMRLL) the chain is on the cytoplasmic side. The chain crosses the membrane as a helical span at residues 134–154 (LFLVGATTVLSAIAWTVLTFF). Topologically, residues 155–190 (EHPIRKLVDPVTNETTIIELPQLLLRSYYPFDASKG) are extracellular. N167 is a glycosylation site (N-linked (GlcNAc...) asparagine). Residues 191-211 (IMHVIVLIYQFYWVLFMLIDA) traverse the membrane as a helical segment. At 212 to 350 (NSLDVLFCSW…IVRLVTAVGD (139 aa)) the chain is on the cytoplasmic side. The tract at residues 261-280 (SAEHLRESENQPPPPVPPQG) is disordered. The helical transmembrane segment at 351–371 (AYGFALLLHMLTTTITLTLLA) threads the bilayer. Residues 372–383 (YQATKVNGVNVY) lie on the Extracellular side of the membrane. Residues 384–404 (AASTIGYIIYTFGQVFLFCIF) traverse the membrane as a helical segment. Residues 405-455 (GNRLIEESTSVMEAAYSCHWYDGSEEAKTFVQIVCQQCQKAMSISGAKFFT) are Cytoplasmic-facing. Residues 456–476 (VSLDLFASVLGAVVTYFMVLV) form a helical membrane-spanning segment. The Extracellular portion of the chain corresponds to 477–479 (QLK).

Belongs to the insect chemoreceptor superfamily. Heteromeric odorant receptor channel (TC 1.A.69) family. Orco subfamily. Heterodimer with conventional odorant receptors (ORs).

Its subcellular location is the cell membrane. Functionally, odorant coreceptor which complexes with conventional odorant receptors (ORs) to form odorant-sensing units, providing sensitive and prolonged odorant signaling and calcium permeability. Obligate coreceptor of all odorant receptors. Orco is a universal and integral part of the functional odorant receptor, involved in the dendritic localization of other olfactory receptors. Can form functional ion channels in the absence of an odor-binding odorant receptor. Plays a central role in the perception of olfactory stimuli in ants and is essential for ant social organization. Required for pheromone sensing and mating behavior. Also required for the development and maintenance of odorant receptor neurons (ORNs) and of antennal lobe glomeruli. In Harpegnathos saltator (Jerdon's jumping ant), this protein is Odorant receptor coreceptor.